Here is a 184-residue protein sequence, read N- to C-terminus: ATP synthase subunit b, chloroplastic (184 aa).

The helical transmembrane segment at 27 to 49 threads the bilayer; that stretch reads LATNLINLSVVFGVLIFFGKGVL.

It belongs to the ATPase B chain family. F-type ATPases have 2 components, F(1) - the catalytic core - and F(0) - the membrane proton channel. F(1) has five subunits: alpha(3), beta(3), gamma(1), delta(1), epsilon(1). F(0) has four main subunits: a(1), b(1), b'(1) and c(10-14). The alpha and beta chains form an alternating ring which encloses part of the gamma chain. F(1) is attached to F(0) by a central stalk formed by the gamma and epsilon chains, while a peripheral stalk is formed by the delta, b and b' chains.

It localises to the plastid. The protein resides in the chloroplast thylakoid membrane. In terms of biological role, f(1)F(0) ATP synthase produces ATP from ADP in the presence of a proton or sodium gradient. F-type ATPases consist of two structural domains, F(1) containing the extramembraneous catalytic core and F(0) containing the membrane proton channel, linked together by a central stalk and a peripheral stalk. During catalysis, ATP synthesis in the catalytic domain of F(1) is coupled via a rotary mechanism of the central stalk subunits to proton translocation. Its function is as follows. Component of the F(0) channel, it forms part of the peripheral stalk, linking F(1) to F(0). This is ATP synthase subunit b, chloroplastic from Aethionema cordifolium (Lebanon stonecress).